The chain runs to 1938 residues: Myosin heavy chain, striated muscle (1938 aa).

One can recognise a Myosin N-terminal SH3-like domain in the interval 29 to 79 (DGKKNCWVPDEKEGFASAEIQSSKGDEITVKIVADSSTRTVKKDDIQSMNP). A Myosin motor domain is found at 83-775 (EKLEDMANMT…VLGNLEEMRD (693 aa)). 176-183 (GESGAGKT) is a binding site for ATP. The actin-binding stretch occupies residues 653-675 (LNKLMKNLYSTHPHFVRCIIPNE). An IQ domain is found at 778–805 (LSKIISMFQAHIRGYLIRKAYKKLQDQR). The interval 836–1938 (LLSIARQEEE…RSSVSVSASN (1103 aa)) is rodlike tail (S2 and LMM domains). Positions 836-1938 (LLSIARQEEE…RSSVSVSASN (1103 aa)) form a coiled coil. 2 stretches are compositionally biased toward basic and acidic residues: residues 1041 to 1058 (VRGD…DLKS) and 1212 to 1225 (SKLE…KREM). 4 disordered regions span residues 1041 to 1062 (VRGD…TQEN), 1187 to 1332 (SALR…EVRN), 1344 to 1363 (LEEE…KANN), and 1898 to 1938 (HELE…SASN). Over residues 1265–1285 (RSINELQSQKSRLQAENSDLT) the composition is skewed to polar residues. Composition is skewed to basic and acidic residues over residues 1286–1303 (RQLE…KEKS), 1310–1332 (EDAR…EVRN), and 1344–1354 (LEEEQESKSDV). Low complexity predominate over residues 1922–1938 (RSSVSVQRSSVSVSASN).

The protein belongs to the TRAFAC class myosin-kinesin ATPase superfamily. Myosin family. Muscle myosin is a hexameric protein that consists of 2 heavy chain subunits (MHC), 2 alkali light chain subunits (MLC) and 2 regulatory light chain subunits (MLC-2).

Its subcellular location is the cytoplasm. The protein resides in the myofibril. Functionally, muscle contraction. Myosin is a protein that binds to F-actin and has ATPase activity that is activated by F-actin. The sequence is that of Myosin heavy chain, striated muscle from Argopecten irradians (Bay scallop).